Here is a 589-residue protein sequence, read N- to C-terminus: Kelch-like protein 25 (589 aa).

In terms of domain architecture, BTB spans 46–114 (TDVTLWAGDR…AYSSRIVINE (69 aa)). In terms of domain architecture, BACK spans 149 to 250 (CLGMMVLSDA…LPSDCLKKAV (102 aa)). Kelch repeat units follow at residues 296 to 340 (TLLI…AIGC), 341 to 388 (KVYV…ELEN), 389 to 444 (CLYV…SAKL), 446 to 492 (LFVF…VLGS), 493 to 538 (QIFI…ASGN), and 539 to 585 (KLYV…STWK).

As to quaternary structure, component of the BCR(KLHL25) E3 ubiquitin ligase complex, at least composed of CUL3, KLHL25 and RBX1.

It participates in protein modification; protein ubiquitination. Functionally, substrate-specific adapter of a BCR (BTB-CUL3-RBX1) E3 ubiquitin ligase complex involved in various processes, such as translation homeostasis and lipid synthesis. The BCR(KLHL25) ubiquitin ligase complex acts by mediating ubiquitination of hypophosphorylated EIF4EBP1 (4E-BP1): ubiquitination and subsequent degradation of hypophosphorylated EIF4EBP1 (4E-BP1) probably serves as a homeostatic mechanism to maintain translation and prevent eIF4E inhibition when eIF4E levels are low. The BCR(KLHL25) complex does not target EIF4EBP1 (4E-BP1) when it is hyperphosphorylated or associated with eIF4E. The BCR(KLHL25) complex also acts as a regulator of lipid synthesis by mediating ubiquitination and degradation of ACLY, thereby inhibiting lipid synthesis. BCR(KLHL25)-mediated degradation of ACLY promotes fatty acid oxidation and is required for differentiation of inducible regulatory T (iTreg) cells. This is Kelch-like protein 25 from Rattus norvegicus (Rat).